Reading from the N-terminus, the 119-residue chain is MSRSVALAVLALLSLSGLEAIQRTPKIQVYSRHPAENGKSNFLNCYVSGFHPSDIEVDLLKNGERIEKVEHSDLSFSKDWSFYLLYYTEFTPTEKDEYACRVNHVTLSQPKIVKWDRDM.

Residues 1–20 (MSRSVALAVLALLSLSGLEA) form the signal peptide. An Ig-like C1-type domain is found at 25 to 113 (PKIQVYSRHP…HVTLSQPKIV (89 aa)). An intrachain disulfide couples cysteine 45 to cysteine 100.

Belongs to the beta-2-microglobulin family. In terms of assembly, heterodimer of an alpha chain and a beta chain. Beta-2-microglobulin is the beta-chain of major histocompatibility complex class I molecules. Forms a heterotrimer with MR1 and a metabolite antigen.

The protein resides in the secreted. Component of the class I major histocompatibility complex (MHC). Involved in the presentation of peptide antigens to the immune system. This is Beta-2-microglobulin (B2M) from Pan troglodytes (Chimpanzee).